Reading from the N-terminus, the 827-residue chain is Multiple RNA-binding domain-containing protein 1 (827 aa).

Positions 5–78 (SRIFVKNLPP…SRISVDIAKP (74 aa)) constitute an RRM 1 domain. Disordered stretches follow at residues 77-116 (KPIADSKPQHKSPSKGSSKDADPKNAPKVLPPNTKVTAAA), 176-230 (AGLE…ATDD), and 256-299 (AASG…DPES). Positions 179–189 (EDGESDDEYED) are enriched in acidic residues. Composition is skewed to low complexity over residues 208–225 (APLAASAEPSESAPPVSL) and 256–270 (AASGSAAVSVPSTSV). Basic and acidic residues predominate over residues 277–288 (KPEEHPAEDSRE). 4 consecutive RRM domains span residues 308–384 (SRLF…PAAA), 489–560 (TTIL…KGPK), 599–682 (SSLF…ASHR), and 704–781 (TKLV…FAQA).

The protein belongs to the RRM MRD1 family.

It localises to the nucleus. In terms of biological role, involved in pre-rRNA processing. The chain is Multiple RNA-binding domain-containing protein 1 (mrd-1) from Neurospora crassa (strain ATCC 24698 / 74-OR23-1A / CBS 708.71 / DSM 1257 / FGSC 987).